A 436-amino-acid chain; its full sequence is Transcription factor Sox-10 (436 aa).

Disordered regions lie at residues 1-55 (MSDD…ERFP), 145-183 (RLRM…AEGG), 195-257 (HLDH…DFGN), 322-346 (PQTD…QPST), and 413-436 (SPSV…LSRP). A Glycyl lysine isopeptide (Lys-Gly) (interchain with G-Cter in SUMO) cross-link involves residue Lys-44. Residues 48–88 (DSEDERFPVCIREAVSQVLSGYDWTLVPMPVRVNGGSKSKP) are dimerization (DIM). Positions 90-158 (VKRPMNAFMV…QHKKDHPDYK (69 aa)) form a DNA-binding region, HMG box. Basic and acidic residues predominate over residues 145–159 (RLRMQHKKDHPDYKY). Composition is skewed to polar residues over residues 205 to 215 (SDGNSEHSAGQ) and 331 to 346 (KTES…QPST). Residues 209 to 295 (SEHSAGQSHG…NGHAGHPSHI (87 aa)) are transactivation domain (TAM). Residues 327–436 (KAQVKTESSS…QPVYTTLSRP (110 aa)) form a transactivation domain (TAC) region. Lys-331 participates in a covalent cross-link: Glycyl lysine isopeptide (Lys-Gly) (interchain with G-Cter in SUMO).

As to quaternary structure, interacts with the sumoylation factors ube2i/ubc9 and sumo1. Post-translationally, sumoylated.

It localises to the cytoplasm. The protein localises to the nucleus. In terms of biological role, acts early in neural crest formation, functioning redundantly with the other group E Sox factors sox8 and sox9 to induce neural crest progenitors. Acts downstream of wnt-signaling at the neural plate border. Involved in the specification of neural crest progenitors fated to form the pigment cell lineage. This Xenopus tropicalis (Western clawed frog) protein is Transcription factor Sox-10.